Consider the following 506-residue polypeptide: uncharacterized protein (506 aa).

An ATP-binding site is contributed by 282–289 (GIQGTGKS).

It belongs to the AAA ATPase family. Highly divergent.

Its subcellular location is the plastid. It localises to the chloroplast. This is an uncharacterized protein from Guillardia theta (Cryptophyte).